Consider the following 350-residue polypeptide: Renin receptor (350 aa).

The N-terminal stretch at 1 to 17 (MAVLVVLLSSLVSSALA) is a signal peptide. Residues 18–302 (NEFSILRSPG…YNLAYKYNLE (285 aa)) lie on the Extracellular side of the membrane. The helical transmembrane segment at 303–323 (YSVVFNLVLWIMTGLALAVII) threads the bilayer. The Cytoplasmic portion of the chain corresponds to 324–350 (TSYNIWNMDPGYDSIIYRMTNQKIRMD). A Mediates retrograde transport to the ER motif is present at residues 346-350 (KIRMD).

Interacts with renin. Accessory component of the multisubunit proton-transporting vacuolar (V)-ATPase protein pump. Interacts (via N-terminus) with ATP6AP1 (via N-terminus). Interacts with ATP6V0D1; ATP6V0D1 is a V-ATPase complex subunit and the interaction promotes V-ATPase complex assembly. Interacts with TMEM9; TMEM9 is a V-ATPase assembly regulator and the interaction induces the interaction with ATP6V0D1. Interacts with VMA21 (via N-terminus); VMA21 is a V-ATPase accessory component. Phosphorylated. Post-translationally, proteolytically cleaved by a furin-like convertase in the trans-Golgi network to generate N- and C-terminal fragments. In terms of tissue distribution, expressed in the brain.

The protein resides in the endoplasmic reticulum membrane. The protein localises to the lysosome membrane. It is found in the cytoplasmic vesicle. It localises to the autophagosome membrane. Its subcellular location is the cell projection. The protein resides in the dendritic spine membrane. The protein localises to the axon. It is found in the endosome membrane. It localises to the clathrin-coated vesicle membrane. Its subcellular location is the secretory vesicle. The protein resides in the synaptic vesicle membrane. Multifunctional protein which functions as a renin, prorenin cellular receptor and is involved in the assembly of the lysosomal proton-transporting V-type ATPase (V-ATPase) and the acidification of the endo-lysosomal system. May mediate renin-dependent cellular responses by activating ERK1 and ERK2. By increasing the catalytic efficiency of renin in AGT/angiotensinogen conversion to angiotensin I, may also play a role in the renin-angiotensin system (RAS). Through its function in V-type ATPase (v-ATPase) assembly and acidification of the lysosome it regulates protein degradation and may control different signaling pathways important for proper brain development, synapse morphology and synaptic transmission. The protein is Renin receptor (Atp6ap2) of Rattus norvegicus (Rat).